Reading from the N-terminus, the 90-residue chain is Protein S100-A6 (90 aa).

EF-hand domains are found at residues 12 to 47 and 48 to 83; these read LVAI…IGSK and LQDA…LALI. Positions 28 and 33 each coordinate Ca(2+). The residue at position 40 (K40) is an N6-acetyllysine. Phosphoserine is present on S46. Residue K47 is modified to N6-acetyllysine; alternate. K47 is modified (N6-succinyllysine; alternate). Positions 61, 63, 65, 67, and 72 each coordinate Ca(2+).

It belongs to the S-100 family. In terms of assembly, homodimer; head to tail assembly of 2 subunits. Interacts with CACYBP in a calcium-dependent manner. Interacts with ANXA2 and ANXA11 (via N-terminus). Interacts with SUGT1. Interacts with TP53; has higher affinity for TP53 that is phosphorylated on its N-terminal domain, and lower affinity for TP53 that is phosphorylated on its C-terminal domain. Interacts with tropomyosin. Interacts with FKBP4. Interacts with PPP5C (via TPR repeats); the interaction is calcium-dependent and modulates PPP5C activity. Interacts with TPPP; this interaction inhibits TPPP dimerization. Post-translationally, the N-terminus is blocked.

It is found in the nucleus envelope. It localises to the cytoplasm. Its subcellular location is the cell membrane. Its function is as follows. May function as calcium sensor and modulator, contributing to cellular calcium signaling. May function by interacting with other proteins, such as TPR-containing proteins, and indirectly play a role in many physiological processes such as the reorganization of the actin cytoskeleton and in cell motility. Binds 2 calcium ions. Calcium binding is cooperative. The polypeptide is Protein S100-A6 (S100A6) (Homo sapiens (Human)).